A 164-amino-acid chain; its full sequence is FMN reductase (NADH) RutF (164 aa).

This sequence belongs to the non-flavoprotein flavin reductase family. RutF subfamily.

The enzyme catalyses FMNH2 + NAD(+) = FMN + NADH + 2 H(+). Functionally, catalyzes the reduction of FMN to FMNH2 which is used to reduce pyrimidine by RutA via the Rut pathway. This is FMN reductase (NADH) RutF from Enterobacter cloacae subsp. cloacae (strain ATCC 13047 / DSM 30054 / NBRC 13535 / NCTC 10005 / WDCM 00083 / NCDC 279-56).